The chain runs to 430 residues: Lipoyl synthase, mitochondrial (430 aa).

The N-terminal 37 residues, 1-37 (MAASTGKLRTLFSAHSSLSARPSSALPALRLTILRSY), are a transit peptide targeting the mitochondrion. A compositionally biased stretch (low complexity) spans 40-56 (TTPPDSSISNPSNPSTT). Residues 40-64 (TTPPDSSISNPSNPSTTVKRPPTAF) are disordered. [4Fe-4S] cluster contacts are provided by Cys141, Cys146, Cys152, Cys172, Cys176, Cys179, and Ser387. Residues 155-376 (GSSKSAATAT…KERALEMGFL (222 aa)) form the Radical SAM core domain.

Belongs to the radical SAM superfamily. Lipoyl synthase family. It depends on [4Fe-4S] cluster as a cofactor.

The protein resides in the mitochondrion. The catalysed reaction is [[Fe-S] cluster scaffold protein carrying a second [4Fe-4S](2+) cluster] + N(6)-octanoyl-L-lysyl-[protein] + 2 oxidized [2Fe-2S]-[ferredoxin] + 2 S-adenosyl-L-methionine + 4 H(+) = [[Fe-S] cluster scaffold protein] + N(6)-[(R)-dihydrolipoyl]-L-lysyl-[protein] + 4 Fe(3+) + 2 hydrogen sulfide + 2 5'-deoxyadenosine + 2 L-methionine + 2 reduced [2Fe-2S]-[ferredoxin]. Its pathway is protein modification; protein lipoylation via endogenous pathway; protein N(6)-(lipoyl)lysine from octanoyl-[acyl-carrier-protein]: step 2/2. Functionally, catalyzes the radical-mediated insertion of two sulfur atoms into the C-6 and C-8 positions of the octanoyl moiety bound to the lipoyl domains of lipoate-dependent enzymes, thereby converting the octanoylated domains into lipoylated derivatives. In Blastomyces gilchristii (strain SLH14081) (Blastomyces dermatitidis), this protein is Lipoyl synthase, mitochondrial.